Consider the following 518-residue polypeptide: MPQSAEHVLDHVELFRGPEYQQMLAKKKIFENPRDPAEVERIKEWTKTAEYREKNFAREALAVNPAKACQPLGAVFASVGFERTLPFVHGSQGCVAYYRSHLSRHFKEPSSCVSSSMTEDAAVFGGLNNMTDGLANSYKMYKPKMIAVSTTCMAEVIGDDLNAFIKTSKEKGSVPADFDVPFAHTPAFVGSHVTGYDNALKGILEHFWDGKAGTAPKLERKPNGAINIIGGFDGYTVGNLREIKRILELMGIQHTVLADNSEVFDTPTDGEFRMYDGGTTLKDAANAIHAKATISMQQWCTEKTLSFAAEHGQDVLSFNYPVGLSATDDFIVALSRISGKEIPEQLARERGRLVDAIADSSAHVHGKKFAIYGDPDLCYGLAAFLLELGAEPTHVLSTNGNKAWQEKMQALLASSPFGQGCQVYPGRDLWHMRSLLFTEPVDFLIGNTYGKYLERDTATPLIRIGFPIFDRHHHHRSPIWGYQGGLNVLVKILDKIFDEIDNKTNILGKTDYSFDIIR.

Residues C69, C94, and C152 each contribute to the [8Fe-7S] cluster site.

It belongs to the NifD/NifK/NifE/NifN family. As to quaternary structure, tetramer of two alpha and two beta chains. Forms complex with the iron protein (nitrogenase component 2). [8Fe-7S] cluster is required as a cofactor.

The enzyme catalyses N2 + 8 reduced [2Fe-2S]-[ferredoxin] + 16 ATP + 16 H2O = H2 + 8 oxidized [2Fe-2S]-[ferredoxin] + 2 NH4(+) + 16 ADP + 16 phosphate + 6 H(+). Functionally, this molybdenum-iron protein is part of the nitrogenase complex that catalyzes the key enzymatic reactions in nitrogen fixation. The protein is Nitrogenase molybdenum-iron protein beta chain (nifK) of Bradyrhizobium diazoefficiens (strain JCM 10833 / BCRC 13528 / IAM 13628 / NBRC 14792 / USDA 110).